A 140-amino-acid chain; its full sequence is Large ribosomal subunit protein bL17 (140 aa).

The span at 119–133 shows a compositional bias: basic and acidic residues; sequence DPSAKGAADRARLEE. Residues 119-140 form a disordered region; the sequence is DPSAKGAADRARLEEEGGMTEE.

Belongs to the bacterial ribosomal protein bL17 family. In terms of assembly, part of the 50S ribosomal subunit. Contacts protein L32.

This Maricaulis maris (strain MCS10) (Caulobacter maris) protein is Large ribosomal subunit protein bL17.